A 262-amino-acid chain; its full sequence is Putative non-heme bromoperoxidase BpoC (262 aa).

Residues Arg21, 87–88 (SM), and Arg120 each bind substrate. The active site involves Ser87. Catalysis depends on residues Asp211 and His239. His239 lines the substrate pocket.

This sequence belongs to the AB hydrolase superfamily. As to quaternary structure, homodimer.

This chain is Putative non-heme bromoperoxidase BpoC (bpoC), found in Mycobacterium tuberculosis (strain CDC 1551 / Oshkosh).